Reading from the N-terminus, the 89-residue chain is Extender of the chronological lifespan protein ecl3 (89 aa).

Belongs to the ecl1 family.

It is found in the nucleus. In terms of biological role, involved in chronological cell aging. The polypeptide is Extender of the chronological lifespan protein ecl3 (ecl3) (Schizosaccharomyces pombe (strain 972 / ATCC 24843) (Fission yeast)).